Here is a 213-residue protein sequence, read N- to C-terminus: EEF1A lysine methyltransferase 1 (213 aa).

The protein belongs to the class I-like SAM-binding methyltransferase superfamily. EFM5 family.

Its subcellular location is the cytoplasm. It carries out the reaction L-lysyl-[protein] + 3 S-adenosyl-L-methionine = N(6),N(6),N(6)-trimethyl-L-lysyl-[protein] + 3 S-adenosyl-L-homocysteine + 3 H(+). Protein-lysine methyltransferase that selectively catalyzes the trimethylation of EEF1A at 'Lys-79'. This Gallus gallus (Chicken) protein is EEF1A lysine methyltransferase 1.